Reading from the N-terminus, the 630-residue chain is Chaperone protein HtpG (630 aa).

An a; substrate-binding region spans residues 1 to 339 (MSHTETHAFQ…SNDLPLNVSR (339 aa)). A b region spans residues 340 to 556 (EILQSNRVVD…EGDISAHMAR (217 aa)). The segment at 557-630 (MMEQMGQAMP…RMNALLSEVI (74 aa)) is c.

It belongs to the heat shock protein 90 family. In terms of assembly, homodimer.

It localises to the cytoplasm. Molecular chaperone. Has ATPase activity. This chain is Chaperone protein HtpG, found in Hydrogenovibrio crunogenus (strain DSM 25203 / XCL-2) (Thiomicrospira crunogena).